Here is a 325-residue protein sequence, read N- to C-terminus: Melanocortin receptor 5 (325 aa).

Topologically, residues 1 to 37 (MNSSFHLHFLDLNLNATEGNLSGPNVKNKSSPCEDMG) are extracellular. Residues Asn2, Asn15, Asn20, and Asn28 are each glycosylated (N-linked (GlcNAc...) asparagine). A helical membrane pass occupies residues 38–61 (IAVEVFLTLGVISLLENILVIGAI). At 62 to 73 (VKNKNLHSPMYF) the chain is on the cytoplasmic side. The chain crosses the membrane as a helical span at residues 74–97 (FVCSLAVADMLVSMSSAWETITIY). Residues 98–114 (LLNNKHLVIADAFVRHI) lie on the Extracellular side of the membrane. The helical transmembrane segment at 115–138 (DNVFDSMICISVVASMCSLLAIAV) threads the bilayer. At 139–155 (DRYVTIFYALRYHHIMT) the chain is on the cytoplasmic side. Residues 156 to 179 (ARRSGAIIAGIWAFCTGCGIVFIL) traverse the membrane as a helical segment. At 180–186 (YSESTYV) the chain is on the extracellular side. A helical transmembrane segment spans residues 187–211 (ILCLISMFFAMLFLLVSLYIHMFLL). At 212 to 239 (ARTHVKRIAALPRASSARQRTSMQGAVT) the chain is on the cytoplasmic side. A helical membrane pass occupies residues 240-265 (VTMLLGVFTVCWAPFFLHLTLMLSCP). Over 266-273 (QNLYCSCF) the chain is Extracellular. A helical membrane pass occupies residues 274–297 (MSHFNMYLILIMCNSVMDPLIYAF). Residues 298–325 (RSQEMRKTFKEIICCRGFRIACSFPRRD) lie on the Cytoplasmic side of the membrane. 2 S-palmitoyl cysteine lipidation sites follow: Cys311 and Cys312.

Belongs to the G-protein coupled receptor 1 family.

The protein localises to the cell membrane. Its function is as follows. Receptor for MSH (alpha, beta and gamma) and ACTH. The activity of this receptor is mediated by G proteins which activate adenylate cyclase. This receptor is a possible mediator of the immunomodulation properties of melanocortins. The chain is Melanocortin receptor 5 (MC5R) from Pan troglodytes (Chimpanzee).